The sequence spans 494 residues: UPF0371 protein SPy_1343/M5005_Spy1095 (494 aa).

It belongs to the UPF0371 family.

The chain is UPF0371 protein SPy_1343/M5005_Spy1095 from Streptococcus pyogenes serotype M1.